The chain runs to 340 residues: Phosphate acyltransferase (340 aa).

It belongs to the PlsX family. As to quaternary structure, homodimer. Probably interacts with PlsY.

Its subcellular location is the cytoplasm. The catalysed reaction is a fatty acyl-[ACP] + phosphate = an acyl phosphate + holo-[ACP]. The protein operates within lipid metabolism; phospholipid metabolism. Functionally, catalyzes the reversible formation of acyl-phosphate (acyl-PO(4)) from acyl-[acyl-carrier-protein] (acyl-ACP). This enzyme utilizes acyl-ACP as fatty acyl donor, but not acyl-CoA. This Nitrosococcus oceani (strain ATCC 19707 / BCRC 17464 / JCM 30415 / NCIMB 11848 / C-107) protein is Phosphate acyltransferase.